Reading from the N-terminus, the 544-residue chain is MNMSKTTISVKLKIIDLSSEKKEFLDNYFNEYAKATTFCQLRIRRLLRNTHWLGKKEKSSKKWIFESGICDLCGENKELVNEDRNSGEPAKICKRCYNGRYGNQMIRKLFVSTKKREVQENMDIRRVAKLNNTHYHRIPEEAFDMIKAADTAEKRRKKNVEYDKKRQMEFIEMFNDEKKRAARPKKPNERETRYVHISKLESPSKGYTLNGIKRKIDGMGKKIERAEKGLSRKKIFGYQGNRIKLDSNWVRFDLAESEITIPSLFKEMKLRITGPTNVHSKSGQIYFAEWFERINKQPNNYCYLIRKTSSNGKYEYYLQYTYEAEVEANKEYAGCLGVDIGCSKLAAAVYYDSKNKKAQKPIEIFTNPIKKIKMRREKLIKLLSRVKVRHRRRKLMQLSKTEPIIDYTCHKTARKIVEMANTAKAFISMENLETGIKQKQQARETKKQKFYRNMFLFRKLSKLIEYKALLKGIKIVYVKPDYTSQTCSSCGADKEKTERPSQAIFRCLNPTCRYYQRDINADFNAAVNIAKKALNNTEVVTTLL.

The interval 1-195 (MNMSKTTISV…KPNERETRYV (195 aa)) is recognition domain (REC). Residues 196-326 (HISKLESPSK…YLQYTYEAEV (131 aa)) form a wedge domain (WED) region. Positions 327 to 334 (EANKEYAG) are linker. The ruvC-I stretch occupies residues 335–485 (CLGVDIGCSK…VYVKPDYTSQ (151 aa)). Active-site residues include D339 and E430. The interval 486–520 (TCSSCGADKEKTERPSQAIFRCLNPTCRYYQRDIN) is target nucleic acid-binding (TNB). Residues C487, C490, C507, and C512 each coordinate Zn(2+). A ruvC-II region spans residues 521–541 (ADFNAAVNIAKKALNNTEVVT). Residue D522 is part of the active site.

It belongs to the CRISPR-associated endonuclease Cas12f family. An asymmetric homodimer. Guide RNA is probably required for dimerization. It depends on Mg(2+) as a cofactor. Zn(2+) serves as cofactor.

Functionally, CRISPR (clustered regularly interspaced short palindromic repeat), is an adaptive immune system that provides protection against mobile genetic elements (viruses, transposable elements and conjugative plasmids). CRISPR clusters contain sequences complementary to antecedent mobile elements and target invading nucleic acids. CRISPR clusters are transcribed and processed into CRISPR RNA (crRNA), which requires a trans-encoded small RNA (tracrRNA), but not this protein (in vitro). Recognizes a short motif in the CRISPR repeat sequences (the 5' PAM or protospacer adjacent motif, TTAT in this organism) to help distinguish self versus nonself, as targets within the CRISPR locus do not have PAMs. Upon expression in E.coli of this protein, a mini CRISPR array and the probable tracrRNA, has dsDNA endonuclease activity. DNA cleavage is centered around positions 21 base pairs 3' of PAM. The mini system does not protect E.coli against transformation by foreign plasmids. This Micrarchaeota archaeon (strain CG1_02_47_40) protein is CRISPR-associated endodeoxyribonuclease Cas12f2.